Reading from the N-terminus, the 1125-residue chain is Protein efr-3 (1125 aa).

Disordered regions lie at residues 240–261 (RTSNATAQPSETTGGEPGPNPI), 471–493 (RPSRPTSPPNSSPNGERSDNGAA), 788–819 (TSPPTSPTTSPGRNFTHPMLGSTLSATPKDET), and 845–1093 (QAGS…LGEK). A compositionally biased stretch (polar residues) spans 242–252 (SNATAQPSETT). A compositionally biased stretch (low complexity) spans 788-798 (TSPPTSPTTSP). Polar residues predominate over residues 845–854 (QAGSSQTASL). The span at 855-877 (NGTNGTHRNTVNNNNRLGVNGVT) shows a compositional bias: low complexity. 3 stretches are compositionally biased toward polar residues: residues 878–896 (SPNGSNSNLRPSSSPTGPN), 975–1011 (LSFNPAASGSRQGSPGNTSQAASSPPRRTSQDRTQQL), and 1046–1071 (SRTTSRTQPQATTAHTTLPRPSTSSK).

It belongs to the EFR3 family.

This is Protein efr-3 (efr-3) from Neurospora crassa (strain ATCC 24698 / 74-OR23-1A / CBS 708.71 / DSM 1257 / FGSC 987).